The following is a 269-amino-acid chain: Putative imidazole glycerol phosphate synthase subunit hisF2 (269 aa).

Aspartate 133 is an active-site residue.

The protein belongs to the HisA/HisF family. In terms of assembly, heterodimer of HisH and HisF.

It is found in the cytoplasm. The catalysed reaction is 5-[(5-phospho-1-deoxy-D-ribulos-1-ylimino)methylamino]-1-(5-phospho-beta-D-ribosyl)imidazole-4-carboxamide + L-glutamine = D-erythro-1-(imidazol-4-yl)glycerol 3-phosphate + 5-amino-1-(5-phospho-beta-D-ribosyl)imidazole-4-carboxamide + L-glutamate + H(+). It functions in the pathway amino-acid biosynthesis; L-histidine biosynthesis; L-histidine from 5-phospho-alpha-D-ribose 1-diphosphate: step 5/9. IGPS catalyzes the conversion of PRFAR and glutamine to IGP, AICAR and glutamate. The HisF subunit catalyzes the cyclization activity that produces IGP and AICAR from PRFAR using the ammonia provided by the HisH subunit. The chain is Putative imidazole glycerol phosphate synthase subunit hisF2 (hisF2) from Parasynechococcus marenigrum (strain WH8102).